The chain runs to 315 residues: DNA-directed RNA polymerase subunit alpha (315 aa).

Residues 1-228 (MLEIEKPKIE…EHFKLFMTLT (228 aa)) form an alpha N-terminal domain (alpha-NTD) region. The interval 245-315 (KEKVLEMTIE…LGLSLKLNDE (71 aa)) is alpha C-terminal domain (alpha-CTD).

Belongs to the RNA polymerase alpha chain family. As to quaternary structure, homodimer. The RNAP catalytic core consists of 2 alpha, 1 beta, 1 beta' and 1 omega subunit. When a sigma factor is associated with the core the holoenzyme is formed, which can initiate transcription.

It catalyses the reaction RNA(n) + a ribonucleoside 5'-triphosphate = RNA(n+1) + diphosphate. Functionally, DNA-dependent RNA polymerase catalyzes the transcription of DNA into RNA using the four ribonucleoside triphosphates as substrates. The polypeptide is DNA-directed RNA polymerase subunit alpha (Clostridium acetobutylicum (strain ATCC 824 / DSM 792 / JCM 1419 / IAM 19013 / LMG 5710 / NBRC 13948 / NRRL B-527 / VKM B-1787 / 2291 / W)).